Here is a 96-residue protein sequence, read N- to C-terminus: MEIEKTESAEEVFAVPEPDVPWVTIVHNDPVNLMSYVTYVFQSYFGYSKDKATKLMMDVHHKGRAVVSSGSREEMERDVQAMHGYGLWATLQQDRK.

This sequence belongs to the ClpS family. In terms of assembly, binds to the N-terminal domain of the chaperone ClpA.

Its function is as follows. Involved in the modulation of the specificity of the ClpAP-mediated ATP-dependent protein degradation. The protein is ATP-dependent Clp protease adapter protein ClpS of Streptomyces coelicolor (strain ATCC BAA-471 / A3(2) / M145).